The following is a 313-amino-acid chain: Biotin synthase (313 aa).

Positions 28-258 (NFGNDIELCS…LFPQARLRLS (231 aa)) constitute a Radical SAM core domain. The [4Fe-4S] cluster site is built by C46, C50, and C53. [2Fe-2S] cluster contacts are provided by C90, C121, C181, and R256.

Belongs to the radical SAM superfamily. Biotin synthase family. In terms of assembly, homodimer. [4Fe-4S] cluster is required as a cofactor. The cofactor is [2Fe-2S] cluster.

It catalyses the reaction (4R,5S)-dethiobiotin + (sulfur carrier)-SH + 2 reduced [2Fe-2S]-[ferredoxin] + 2 S-adenosyl-L-methionine = (sulfur carrier)-H + biotin + 2 5'-deoxyadenosine + 2 L-methionine + 2 oxidized [2Fe-2S]-[ferredoxin]. It functions in the pathway cofactor biosynthesis; biotin biosynthesis; biotin from 7,8-diaminononanoate: step 2/2. Its function is as follows. Catalyzes the conversion of dethiobiotin (DTB) to biotin by the insertion of a sulfur atom into dethiobiotin via a radical-based mechanism. In Francisella philomiragia subsp. philomiragia (strain ATCC 25017 / CCUG 19701 / FSC 153 / O#319-036), this protein is Biotin synthase.